The chain runs to 381 residues: Probable peptidoglycan glycosyltransferase FtsW (381 aa).

Residues 1 to 15 (MNNKKKIVKIFFYDK) are Cytoplasmic-facing. The helical transmembrane segment at 16-36 (ILFFLLISLSIIGIIIVSSAS) threads the bilayer. Residues 37 to 53 (ISFGIRLHNDYFYFAKR) are Periplasmic-facing. Residues 54-74 (NLLYFFLSFFLFFQIIRIPIN) traverse the membrane as a helical segment. The Cytoplasmic segment spans residues 75–81 (QLEKYNK). A helical membrane pass occupies residues 82-102 (IALLINLFLLIIVFIIGNSIN). Topologically, residues 103–109 (GAIRWIK) are periplasmic. Residues 110–130 (IGFFSIQPSECSKLILFFYIS) form a helical membrane-spanning segment. At 131–143 (DYIVKKNKELKNK) the chain is on the cytoplasmic side. A helical transmembrane segment spans residues 144 to 164 (LWGFLKPIIIMLIFVILLLMQ). At 165–166 (PD) the chain is on the periplasmic side. Transmembrane regions (helical) follow at residues 167 to 187 (LGNS…AGIN) and 188 to 208 (LWKC…LIIF). Topologically, residues 209 to 278 (KPYRIRRILS…FSILGEELGY (70 aa)) are periplasmic. The helical transmembrane segment at 279-299 (IGSIIILIMLFFVIFRIFLIG) threads the bilayer. At 300–317 (KNSFIQKKFFSGYFSFSV) the chain is on the cytoplasmic side. A helical membrane pass occupies residues 318–338 (GIWISLQTIMNVGGVIGILPI). The Periplasmic segment spans residues 339–343 (KGLTL). Residues 344-364 (PFISYGGSSLITIFSAIAIVI) traverse the membrane as a helical segment. Residues 365-381 (RSDFELRINKYQAYLKQ) lie on the Cytoplasmic side of the membrane.

This sequence belongs to the SEDS family. FtsW subfamily.

Its subcellular location is the cell inner membrane. The catalysed reaction is [GlcNAc-(1-&gt;4)-Mur2Ac(oyl-L-Ala-gamma-D-Glu-L-Lys-D-Ala-D-Ala)](n)-di-trans,octa-cis-undecaprenyl diphosphate + beta-D-GlcNAc-(1-&gt;4)-Mur2Ac(oyl-L-Ala-gamma-D-Glu-L-Lys-D-Ala-D-Ala)-di-trans,octa-cis-undecaprenyl diphosphate = [GlcNAc-(1-&gt;4)-Mur2Ac(oyl-L-Ala-gamma-D-Glu-L-Lys-D-Ala-D-Ala)](n+1)-di-trans,octa-cis-undecaprenyl diphosphate + di-trans,octa-cis-undecaprenyl diphosphate + H(+). The protein operates within cell wall biogenesis; peptidoglycan biosynthesis. In terms of biological role, peptidoglycan polymerase that is essential for cell division. The sequence is that of Probable peptidoglycan glycosyltransferase FtsW from Wigglesworthia glossinidia brevipalpis.